Consider the following 232-residue polypeptide: MGQKVHPNGIRLGIVKPWNATWFASSQEFADNLDGDFKVRQYLTKELKKASLSRIVIERPAKSIRVTIHTARPGVVIGKKGEDVEKLRAGVAKIAGVPAQINIAEVRKPELDAHLVADSIASQLERRVMFRRAMKRAVQNAMRLGAQGIKVQVGGRLGGAEIARSEWYREGRVPLHTLRADIDYATASAHTQYGVIGVKVWIFKGEVLGGMPAANAVEPKADKPKKQRRSRK.

Residues 39–107 (VRQYLTKELK…PAQINIAEVR (69 aa)) enclose the KH type-2 domain.

It belongs to the universal ribosomal protein uS3 family. In terms of assembly, part of the 30S ribosomal subunit. Forms a tight complex with proteins S10 and S14.

Its function is as follows. Binds the lower part of the 30S subunit head. Binds mRNA in the 70S ribosome, positioning it for translation. The sequence is that of Small ribosomal subunit protein uS3 from Aliivibrio salmonicida (strain LFI1238) (Vibrio salmonicida (strain LFI1238)).